Reading from the N-terminus, the 239-residue chain is uncharacterized protein (239 aa).

Helical transmembrane passes span 30–50 (VALLISMVVCSLNINILIELI), 76–96 (LYLGIILSSPIIFYEIIIFII), 107–127 (LIPILIASGCLFVAGLIFGYI), 157–177 (FIILSLFSTAISFQIPIFQIL), 188–208 (MMLSVWRYVVVGSTIFSAIIT), and 214–234 (LIQLFLSVAVMFLYFSSILVL).

It belongs to the TatC family.

The protein resides in the plastid. It is found in the chloroplast membrane. This is an uncharacterized protein from Cyanidium caldarium (Red alga).